Reading from the N-terminus, the 45-residue chain is Large ribosomal subunit protein bL34 (45 aa).

Positions 1–10 (MTQRTLGGTN) are enriched in polar residues. Positions 1–45 (MTQRTLGGTNRKQKRTSGFRARMRKSNGRKVIQARRKKGRHRLSV) are disordered. The span at 11 to 45 (RKQKRTSGFRARMRKSNGRKVIQARRKKGRHRLSV) shows a compositional bias: basic residues.

Belongs to the bacterial ribosomal protein bL34 family.

The sequence is that of Large ribosomal subunit protein bL34 from Crocosphaera subtropica (strain ATCC 51142 / BH68) (Cyanothece sp. (strain ATCC 51142)).